Here is a 153-residue protein sequence, read N- to C-terminus: Riboflavin synthase (153 aa).

The protein belongs to the DMRL synthase family. Homooligomer. Requires Mg(2+) as cofactor.

The catalysed reaction is 2 6,7-dimethyl-8-(1-D-ribityl)lumazine + H(+) = 5-amino-6-(D-ribitylamino)uracil + riboflavin. The protein operates within cofactor biosynthesis; riboflavin biosynthesis; riboflavin from 2-hydroxy-3-oxobutyl phosphate and 5-amino-6-(D-ribitylamino)uracil: step 2/2. Inhibited by EDTA. In terms of biological role, the relatively low activity of this enzyme suggested that 6,7-dimethyl-8-ribityllumazine might not be its natural substrate. This Methanothermobacter marburgensis (strain ATCC BAA-927 / DSM 2133 / JCM 14651 / NBRC 100331 / OCM 82 / Marburg) (Methanobacterium thermoautotrophicum) protein is Riboflavin synthase (ribC).